Here is a 111-residue protein sequence, read N- to C-terminus: Large ribosomal subunit protein uL22 (111 aa).

Belongs to the universal ribosomal protein uL22 family. Part of the 50S ribosomal subunit.

This protein binds specifically to 23S rRNA; its binding is stimulated by other ribosomal proteins, e.g. L4, L17, and L20. It is important during the early stages of 50S assembly. It makes multiple contacts with different domains of the 23S rRNA in the assembled 50S subunit and ribosome. Its function is as follows. The globular domain of the protein is located near the polypeptide exit tunnel on the outside of the subunit, while an extended beta-hairpin is found that lines the wall of the exit tunnel in the center of the 70S ribosome. This chain is Large ribosomal subunit protein uL22, found in Mycoplasma capricolum subsp. capricolum (strain California kid / ATCC 27343 / NCTC 10154).